The chain runs to 187 residues: Ribosome-recycling factor (187 aa).

The protein belongs to the RRF family.

It is found in the cytoplasm. Functionally, responsible for the release of ribosomes from messenger RNA at the termination of protein biosynthesis. May increase the efficiency of translation by recycling ribosomes from one round of translation to another. This chain is Ribosome-recycling factor, found in Ligilactobacillus salivarius (strain UCC118) (Lactobacillus salivarius).